The sequence spans 72 residues: MSQKLQKPSFLSEYLRSIRLFSKKCVRPSGKELSMSIKRHAIGIGFLGILGYAIKLIHIPINNIIVSSPGKE.

Residues 1-40 (MSQKLQKPSFLSEYLRSIRLFSKKCVRPSGKELSMSIKRH) are Cytoplasmic-facing. Residues 41 to 61 (AIGIGFLGILGYAIKLIHIPI) traverse the membrane as a helical segment. Residues 62–72 (NNIIVSSPGKE) are Extracellular-facing.

It belongs to the SecE/SEC61-gamma family. In terms of assembly, heterotrimeric complex composed of SEC61-alpha, SEC61-beta and SEC61-gamma.

It is found in the endoplasmic reticulum membrane. Necessary for protein translocation in the endoplasmic reticulum. This chain is Probable protein transport protein Sec61 subunit gamma, found in Encephalitozoon cuniculi (strain GB-M1) (Microsporidian parasite).